Consider the following 96-residue polypeptide: Citrate lyase acyl carrier protein (96 aa).

S14 is modified (O-(phosphoribosyl dephospho-coenzyme A)serine).

This sequence belongs to the CitD family. In terms of assembly, oligomer with a subunit composition of (alpha,beta,gamma)6.

It localises to the cytoplasm. Covalent carrier of the coenzyme of citrate lyase. In Lactococcus lactis subsp. lactis (strain IL1403) (Streptococcus lactis), this protein is Citrate lyase acyl carrier protein.